We begin with the raw amino-acid sequence, 315 residues long: Protein OPG185 (315 aa).

The N-terminal stretch at 1–16 is a signal peptide; it reads MTRLPILLLLISLVYA. One can recognise an Ig-like V-type domain in the interval 17-121; it reads TPFPQTSKKI…NDTDKVDYEE (105 aa). Topologically, residues 17 to 279 are virion surface; it reads TPFPQTSKKI…SNYKTKDFVE (263 aa). Cysteine 34 and cysteine 103 are oxidised to a cystine. Asparagine 37, asparagine 69, asparagine 112, and asparagine 161 each carry an N-linked (GlcNAc...) asparagine; by host glycan. A compositionally biased stretch (polar residues) spans 193–202; it reads NTVSASSGES. The disordered stretch occupies residues 193 to 213; that stretch reads NTVSASSGESTTDETPEPITD. N-linked (GlcNAc...) asparagine; by host glycosylation occurs at asparagine 254. Residues 280 to 303 traverse the membrane as a helical segment; the sequence is IFGITALIILSAVAIFCITYYIYN. Topologically, residues 304-315 are intravirion; that stretch reads KRSRKYKTENKV.

Belongs to the orthopoxvirus OPG185 family. In terms of assembly, heterodimerizes with OPG040. The heterodimer OPG185-OPG040 interacts with components of the entry fusion complex OPG143 and OPG094. Heterodimer with C3/VPC protein; disulfide-linked. Post-translationally, glycosylated; contains phosphate and sulfate-substituted glycans. O-glycosylation is required for hemagglutination and hemadsorption activities of infected cell membranes.

It is found in the virion membrane. The protein localises to the host membrane. In terms of biological role, prevents cell to cell fusion by interacting with and directing the viral OPG040 protein on the host plasma membrane. The OPG185-OPG040 complex associates with components of the entry fusion complex (EFC) presumably to avoid superinfection and syncytium formation. Via its interaction with C3/VCP protein, protects the infected cell and probably also the extracellular enveloped virus from complement attack. The sequence is that of Protein OPG185 (OPG185) from Homo sapiens (Human).